The sequence spans 499 residues: Putative alpha-galactosidase 8 (499 aa).

2 N-linked (GlcNAc...) asparagine glycosylation sites follow: Asn-154 and Asn-191. Catalysis depends on Asp-238, which acts as the Nucleophile. Asn-256 is a glycosylation site (N-linked (GlcNAc...) asparagine). Asp-303 serves as the catalytic Proton donor.

Belongs to the glycosyl hydrolase 27 family.

The protein localises to the secreted. The enzyme catalyses Hydrolysis of terminal, non-reducing alpha-D-galactose residues in alpha-D-galactosides, including galactose oligosaccharides, galactomannans and galactolipids.. Functionally, putative alpha-galactosidase involved in the degradation of simple oligosaccharides like melibiose, raffinose and stachyose, and of polymeric galacto(gluco)mannans. This chain is Putative alpha-galactosidase 8 (agl8), found in Emericella nidulans (strain FGSC A4 / ATCC 38163 / CBS 112.46 / NRRL 194 / M139) (Aspergillus nidulans).